We begin with the raw amino-acid sequence, 90 residues long: MSILPTTDSVPEEAITKASGDVDGFEKAVVGGVIAAVFITLITVVVLITVYLYKHKGSYRTNENLEDVEASKTLQMEDSALTPEKKEYFM.

At 1 to 27 the chain is on the extracellular side; that stretch reads MSILPTTDSVPEEAITKASGDVDGFEK. A helical; Signal-anchor for type III membrane protein transmembrane segment spans residues 28–48; that stretch reads AVVGGVIAAVFITLITVVVLI. Residues 49–90 lie on the Cytoplasmic side of the membrane; that stretch reads TVYLYKHKGSYRTNENLEDVEASKTLQMEDSALTPEKKEYFM.

It belongs to the SMAGP family.

The protein resides in the cell membrane. It localises to the cytoplasmic vesicle membrane. Its function is as follows. May play a role in epithelial cell-cell contacts. The sequence is that of Small cell adhesion glycoprotein homolog (smagp) from Xenopus tropicalis (Western clawed frog).